A 381-amino-acid polypeptide reads, in one-letter code: MKRLTILGSTGSIGTQTLDIVRQNPEQLEVFALAAGKNVQEIELQAREFKPRIIGLMEEKAARELKQRVADLDIEVVSGMEGLLRTVTDEVPDTVVTAISGRIGLEPTMEALKVGKDIALANKETLVAGGDLVMGTAQRLGRTILPVDSEHSAIFQCLEEDPRTLDKIILTASGGPFRGWSEEQLQEVTPERALQHPNWAMGAKITIDSATMMNKGLEVIEAHHLFHMEYDQIDVLIHPQSVIHSMVQYCDGSVLAQCGRPDMRLPIQYALTYPTRWPNPFERLDLRGKTLTFFDPEDYDFPALKLAYACGKRGGTLPAVMNAANEVAVHAFLARRVAYLEIIGLVDKVCSEHDVLDATDLETILNADHWARIRTEELIHG.

Residues Thr10, Gly11, Ser12, Ile13, Gly36, Lys37, Asn38, and Asn122 each contribute to the NADPH site. Lys123 lines the 1-deoxy-D-xylulose 5-phosphate pocket. Glu124 contacts NADPH. Residue Asp148 coordinates Mn(2+). Residues Ser149, Glu150, Ser173, and His196 each coordinate 1-deoxy-D-xylulose 5-phosphate. Position 150 (Glu150) interacts with Mn(2+). Gly202 is a binding site for NADPH. The 1-deoxy-D-xylulose 5-phosphate site is built by Ser209, Asn214, Lys215, and Glu218. Glu218 lines the Mn(2+) pocket.

It belongs to the DXR family. The cofactor is Mg(2+). Mn(2+) serves as cofactor.

The enzyme catalyses 2-C-methyl-D-erythritol 4-phosphate + NADP(+) = 1-deoxy-D-xylulose 5-phosphate + NADPH + H(+). It participates in isoprenoid biosynthesis; isopentenyl diphosphate biosynthesis via DXP pathway; isopentenyl diphosphate from 1-deoxy-D-xylulose 5-phosphate: step 1/6. In terms of biological role, catalyzes the NADPH-dependent rearrangement and reduction of 1-deoxy-D-xylulose-5-phosphate (DXP) to 2-C-methyl-D-erythritol 4-phosphate (MEP). In Desulfitobacterium hafniense (strain Y51), this protein is 1-deoxy-D-xylulose 5-phosphate reductoisomerase.